Reading from the N-terminus, the 208-residue chain is Glutathione S-transferase P (208 aa).

A GST N-terminal domain is found at 1 to 78 (MTLKLTYFDI…HLARLNGLNG (78 aa)). Residues Tyr7, Trp38, Lys42, 49–50 (QV), and 62–63 (QS) contribute to the glutathione site. The GST C-terminal domain occupies 80–202 (NETETTFIDM…NKRAAINPPV (123 aa)).

The protein belongs to the GST superfamily. Pi family. In terms of assembly, homodimer. As to expression, expressed in dopaminergic (DA) neuron (at protein levels).

The catalysed reaction is RX + glutathione = an S-substituted glutathione + a halide anion + H(+). Functionally, conjugation of reduced glutathione to a wide number of exogenous and endogenous hydrophobic electrophiles. Prevents dopaminergic CEP neuron degeneration in response to Mn(2+). This chain is Glutathione S-transferase P (gst-1), found in Caenorhabditis elegans.